We begin with the raw amino-acid sequence, 472 residues long: Glutamate--tRNA ligase 2 (472 aa).

The short motif at 10–20 (PSPTGYLHIGG) is the 'HIGH' region element. Residues Cys-99, Cys-101, Cys-126, and Asp-128 each contribute to the Zn(2+) site. Basic and acidic residues predominate over residues 112-130 (EQQARKEKPRYDGRCRDLD). Residues 112-137 (EQQARKEKPRYDGRCRDLDGPPSEEV) form a disordered region. Positions 240 to 244 (RLSKR) match the 'KMSKS' region motif. Lys-243 lines the ATP pocket.

It belongs to the class-I aminoacyl-tRNA synthetase family. Glutamate--tRNA ligase type 1 subfamily. Monomer. Zn(2+) is required as a cofactor.

It localises to the cytoplasm. The enzyme catalyses tRNA(Glu) + L-glutamate + ATP = L-glutamyl-tRNA(Glu) + AMP + diphosphate. Functionally, catalyzes the attachment of glutamate to tRNA(Glu) in a two-step reaction: glutamate is first activated by ATP to form Glu-AMP and then transferred to the acceptor end of tRNA(Glu). The sequence is that of Glutamate--tRNA ligase 2 from Halorhodospira halophila (strain DSM 244 / SL1) (Ectothiorhodospira halophila (strain DSM 244 / SL1)).